Reading from the N-terminus, the 164-residue chain is ATP synthase B' chain, cyanelle (164 aa).

Residues 26–46 (ATLPVMMVQLLVLMLILNAVF) form a helical membrane-spanning segment.

It belongs to the ATPase B chain family. F-type ATPases have 2 components, F(1) - the catalytic core - and F(0) - the membrane proton channel. F(1) has five subunits: alpha(3), beta(3), gamma(1), delta(1), epsilon(1). F(0) has four main subunits: a(1), b(1), b'(1) and c(10-14). The alpha and beta chains form an alternating ring which encloses part of the gamma chain. F(1) is attached to F(0) by a central stalk formed by the gamma and epsilon chains, while a peripheral stalk is formed by the delta, b and b' chains.

Its subcellular location is the plastid. The protein localises to the cyanelle thylakoid membrane. Functionally, f(1)F(0) ATP synthase produces ATP from ADP in the presence of a proton or sodium gradient. F-type ATPases consist of two structural domains, F(1) containing the extramembraneous catalytic core and F(0) containing the membrane proton channel, linked together by a central stalk and a peripheral stalk. During catalysis, ATP synthesis in the catalytic domain of F(1) is coupled via a rotary mechanism of the central stalk subunits to proton translocation. In terms of biological role, component of the F(0) channel, it forms part of the peripheral stalk, linking F(1) to F(0). The b'-subunit is a diverged and duplicated form of b found in plants and photosynthetic bacteria. The sequence is that of ATP synthase B' chain, cyanelle from Cyanophora paradoxa.